A 147-amino-acid chain; its full sequence is Hemoglobin subunit epsilon (147 aa).

The region spanning 3-147 is the Globin domain; it reads HFTAEEKAAI…VAIALGHKYH (145 aa). Serine 14 and serine 51 each carry phosphoserine. The heme b site is built by histidine 64 and histidine 93.

The protein belongs to the globin family. In terms of assembly, heterotetramer of two alpha chains and two epsilon chains in early embryonic hemoglobin Gower-2; two zeta chains and two epsilon chains in early embryonic hemoglobin Gower-1. As to expression, red blood cells.

Its function is as follows. The epsilon chain is a beta-type chain of early mammalian embryonic hemoglobin. The chain is Hemoglobin subunit epsilon (HBE1) from Lagothrix lagotricha (Brown woolly monkey).